A 466-amino-acid polypeptide reads, in one-letter code: 3-isopropylmalate dehydratase large subunit (466 aa).

[4Fe-4S] cluster is bound by residues cysteine 347, cysteine 407, and cysteine 410.

It belongs to the aconitase/IPM isomerase family. LeuC type 1 subfamily. As to quaternary structure, heterodimer of LeuC and LeuD. [4Fe-4S] cluster is required as a cofactor.

The enzyme catalyses (2R,3S)-3-isopropylmalate = (2S)-2-isopropylmalate. Its pathway is amino-acid biosynthesis; L-leucine biosynthesis; L-leucine from 3-methyl-2-oxobutanoate: step 2/4. Its function is as follows. Catalyzes the isomerization between 2-isopropylmalate and 3-isopropylmalate, via the formation of 2-isopropylmaleate. The protein is 3-isopropylmalate dehydratase large subunit of Shewanella pealeana (strain ATCC 700345 / ANG-SQ1).